The chain runs to 414 residues: uncharacterized protein (414 aa).

Positions 204–230 (LVGTPAPGPNGSNSDGDSERASQDVRD) are disordered. The segment covering 220 to 230 (DSERASQDVRD) has biased composition (basic and acidic residues).

Belongs to the CdaR family.

This is an uncharacterized protein from Mycobacterium tuberculosis (strain CDC 1551 / Oshkosh).